The sequence spans 271 residues: MTEQVRVAITGGSGRMGRTLIESAKLSSNIYLGAAVERAGSTLIGVDAGELAGVGAMNVAITDSLDNAVDDFDILIDFTSPEASVVHTDWCSRNGKAIVIGTTGFNHAQKEQIAAYAENTPIVMAPNMSVGVNLMWRLLELAAEVMGDYTDIEIIEGHHRHKKDAPSGTALKMGEVIAEVLGRDLEKCAVYGREGITEERSRETIGFSTIRAGDLVGEHTAMFADIGERLEITHKASSRMTFANGAMRAAFWLGDQGPGLYDMQQVLGLKD.

NAD(+)-binding positions include 11-16 and Glu37; that span reads GGSGRM. Arg38 provides a ligand contact to NADP(+). NAD(+)-binding positions include 101–103 and 125–128; these read GTT and APNM. Catalysis depends on His158, which acts as the Proton donor/acceptor. His159 contacts (S)-2,3,4,5-tetrahydrodipicolinate. Catalysis depends on Lys162, which acts as the Proton donor. Residue 168–169 coordinates (S)-2,3,4,5-tetrahydrodipicolinate; that stretch reads GT.

This sequence belongs to the DapB family.

It is found in the cytoplasm. The catalysed reaction is (S)-2,3,4,5-tetrahydrodipicolinate + NAD(+) + H2O = (2S,4S)-4-hydroxy-2,3,4,5-tetrahydrodipicolinate + NADH + H(+). It catalyses the reaction (S)-2,3,4,5-tetrahydrodipicolinate + NADP(+) + H2O = (2S,4S)-4-hydroxy-2,3,4,5-tetrahydrodipicolinate + NADPH + H(+). It functions in the pathway amino-acid biosynthesis; L-lysine biosynthesis via DAP pathway; (S)-tetrahydrodipicolinate from L-aspartate: step 4/4. Its function is as follows. Catalyzes the conversion of 4-hydroxy-tetrahydrodipicolinate (HTPA) to tetrahydrodipicolinate. The chain is 4-hydroxy-tetrahydrodipicolinate reductase from Shewanella loihica (strain ATCC BAA-1088 / PV-4).